The primary structure comprises 78 residues: Large ribosomal subunit protein bL31 (78 aa).

Belongs to the bacterial ribosomal protein bL31 family. Type A subfamily. Part of the 50S ribosomal subunit.

Functionally, binds the 23S rRNA. This chain is Large ribosomal subunit protein bL31 (rpmE), found in Rickettsia typhi (strain ATCC VR-144 / Wilmington).